The following is a 335-amino-acid chain: MKRIAIDAMGGDNAPKAIVEGVNQAIEAFSDIEIQLYGDQTKINSYLIQSDRVAIIHTDEKIMSDDEPAKAVRRKKKASMVLAAKAVKEGKADAIISAGNTGALLAVGLFVVGRIKGVDRPGLLSTIPTVTGLGFDMLDLGANAENTAKHLHQYAILGSFYAKNVRGIANPRVGLLNNGTEETKGDPLRKATYELLTADNTISFVGNVEARELMSGVADVIVSDGFTGNAVLKSIEGTAISIMGQLKQIINSGGIKTKIGASLLKSSLYEMKKTLDYSSAGGAVLFGLKAPVVKSHGSSDVKAIFSTIKQVRTMLDTNVVGQLVEEFAKETQVND.

This sequence belongs to the PlsX family. Homodimer. Probably interacts with PlsY.

The protein localises to the cytoplasm. The enzyme catalyses a fatty acyl-[ACP] + phosphate = an acyl phosphate + holo-[ACP]. Its pathway is lipid metabolism; phospholipid metabolism. Catalyzes the reversible formation of acyl-phosphate (acyl-PO(4)) from acyl-[acyl-carrier-protein] (acyl-ACP). This enzyme utilizes acyl-ACP as fatty acyl donor, but not acyl-CoA. The sequence is that of Phosphate acyltransferase from Streptococcus pyogenes serotype M1.